A 110-amino-acid chain; its full sequence is Large ribosomal subunit protein uL22 (110 aa).

It belongs to the universal ribosomal protein uL22 family. Part of the 50S ribosomal subunit.

This protein binds specifically to 23S rRNA; its binding is stimulated by other ribosomal proteins, e.g. L4, L17, and L20. It is important during the early stages of 50S assembly. It makes multiple contacts with different domains of the 23S rRNA in the assembled 50S subunit and ribosome. In terms of biological role, the globular domain of the protein is located near the polypeptide exit tunnel on the outside of the subunit, while an extended beta-hairpin is found that lines the wall of the exit tunnel in the center of the 70S ribosome. The sequence is that of Large ribosomal subunit protein uL22 from Nitrosomonas eutropha (strain DSM 101675 / C91 / Nm57).